The sequence spans 87 residues: Acyl-CoA-binding protein (87 aa).

Position 2 is an N-acetylserine (S2). The region spanning S2–I87 is the ACB domain. K8 bears the N6-acetyllysine; alternate mark. K8 bears the N6-succinyllysine; alternate mark. K14 contacts an acyl-CoA. K17 bears the N6-succinyllysine mark. The residue at position 29 (Y29) is a Phosphotyrosine. Residues Y29–K33, K51, K55, and Y74 contribute to the an acyl-CoA site. Position 51 is an N6-acetyllysine (K51). K55 is subject to N6-acetyllysine; alternate. K55 is modified (N6-succinyllysine; alternate). The residue at position 55 (K55) is an N6-(2-hydroxyisobutyryl)lysine; alternate. Position 55 is an N6-malonyllysine; alternate (K55). N6-acetyllysine; alternate is present on K77. K77 carries the N6-succinyllysine; alternate modification.

The protein belongs to the ACBP family. In terms of assembly, monomer.

Its subcellular location is the endoplasmic reticulum. The protein localises to the golgi apparatus. Functionally, binds medium- and long-chain acyl-CoA esters with very high affinity and may function as an intracellular carrier of acyl-CoA esters. It is also able to displace diazepam from the benzodiazepine (BZD) recognition site located on the GABA type A receptor. It is therefore possible that this protein also acts as a neuropeptide to modulate the action of the GABA receptor. This is Acyl-CoA-binding protein (Dbi) from Rattus norvegicus (Rat).